A 126-amino-acid chain; its full sequence is Aspartate 1-decarboxylase (126 aa).

Serine 25 acts as the Schiff-base intermediate with substrate; via pyruvic acid in catalysis. Pyruvic acid (Ser) is present on serine 25. Threonine 57 is a binding site for substrate. Tyrosine 58 functions as the Proton donor in the catalytic mechanism. Position 73–75 (73–75 (GAA)) interacts with substrate.

It belongs to the PanD family. In terms of assembly, heterooctamer of four alpha and four beta subunits. Requires pyruvate as cofactor. Is synthesized initially as an inactive proenzyme, which is activated by self-cleavage at a specific serine bond to produce a beta-subunit with a hydroxyl group at its C-terminus and an alpha-subunit with a pyruvoyl group at its N-terminus.

It is found in the cytoplasm. It catalyses the reaction L-aspartate + H(+) = beta-alanine + CO2. Its pathway is cofactor biosynthesis; (R)-pantothenate biosynthesis; beta-alanine from L-aspartate: step 1/1. Catalyzes the pyruvoyl-dependent decarboxylation of aspartate to produce beta-alanine. In Yersinia pseudotuberculosis serotype IB (strain PB1/+), this protein is Aspartate 1-decarboxylase.